The following is a 309-amino-acid chain: Agglutinin (309 aa).

Met1 is subject to N-acetylmethionine. Jacalin-type lectin domains follow at residues 4-148 (FLTV…YVKI) and 163-308 (PRGP…HMEY).

Belongs to the jacalin lectin family.

Its function is as follows. D-mannose/D-glucose-binding lectin. Binds N-linked high-mannose-type glycans. Has a preference for smaller (Man(2)-Man(6)) high-mannose-type glycans to larger (Man(7)-Man(9)) ones. Recognizes both alpha1-6 extended and alpha1-3 extended monoantennary glycans. The addition of alpha1-2Man to the Man-alpha1-3Man-beta branch results in a significant loss of affinity, but beta1-2GlcNAc has some affinity. Has less affinity for biantennary glycans, and affinity is very weak for the biantennary complex-type N-glycans with bisecting GlcNAc. No affinity is observed for tri- and tetra-antennary glycans. Has mitogenic and hemagglutinating activities. The chain is Agglutinin from Castanea crenata (Japanese chestnut).